Consider the following 257-residue polypeptide: Snake venom serine protease BITS01A (257 aa).

Positions 1–18 are cleaved as a signal peptide; that stretch reads MVLIRVIANLLILQVSYA. A propeptide spanning residues 19–24 is cleaved from the precursor; that stretch reads QKSSEL. Residues 25–248 form the Peptidase S1 domain; the sequence is VVGGDECDIN…YLPWIQSIIA (224 aa). 6 cysteine pairs are disulfide-bonded: Cys31–Cys162, Cys49–Cys65, Cys97–Cys255, Cys141–Cys209, Cys173–Cys188, and Cys199–Cys224. The active-site Charge relay system is the His64. Residue Asn101 is glycosylated (N-linked (GlcNAc...) asparagine). The active-site Charge relay system is the Asp109. N-linked (GlcNAc...) asparagine glycans are attached at residues Asn121, Asn153, and Asn169. Catalysis depends on Ser203, which acts as the Charge relay system. N-linked (GlcNAc...) asparagine glycans are attached at residues Asn210 and Asn250.

This sequence belongs to the peptidase S1 family. Snake venom subfamily. As to quaternary structure, monomer. Expressed by the venom gland.

It is found in the secreted. Functionally, snake venom serine protease that may act in the hemostasis system of the prey. The polypeptide is Snake venom serine protease BITS01A (Bothrops insularis (Golden lancehead)).